Here is a 476-residue protein sequence, read N- to C-terminus: Siroheme synthase (476 aa).

Positions 1–207 are precorrin-2 dehydrogenase /sirohydrochlorin ferrochelatase; it reads MTANVLFPLF…QRHAEAEAVL (207 aa). Residues 25-26 and 46-47 each bind NAD(+); these read KV and PS. S132 carries the phosphoserine modification. The segment at 220–476 is uroporphyrinogen-III C-methyltransferase; it reads GSVTLVGAGA…SAPCPPALIL (257 aa). D252 serves as the catalytic Proton acceptor. K274 functions as the Proton donor in the catalytic mechanism. S-adenosyl-L-methionine is bound by residues 305-307, V310, 335-336, M387, and G416; these read GGD and TA.

In the N-terminal section; belongs to the precorrin-2 dehydrogenase / sirohydrochlorin ferrochelatase family. It in the C-terminal section; belongs to the precorrin methyltransferase family.

It carries out the reaction uroporphyrinogen III + 2 S-adenosyl-L-methionine = precorrin-2 + 2 S-adenosyl-L-homocysteine + H(+). It catalyses the reaction precorrin-2 + NAD(+) = sirohydrochlorin + NADH + 2 H(+). The enzyme catalyses siroheme + 2 H(+) = sirohydrochlorin + Fe(2+). Its pathway is cofactor biosynthesis; adenosylcobalamin biosynthesis; precorrin-2 from uroporphyrinogen III: step 1/1. It functions in the pathway cofactor biosynthesis; adenosylcobalamin biosynthesis; sirohydrochlorin from precorrin-2: step 1/1. The protein operates within porphyrin-containing compound metabolism; siroheme biosynthesis; precorrin-2 from uroporphyrinogen III: step 1/1. It participates in porphyrin-containing compound metabolism; siroheme biosynthesis; siroheme from sirohydrochlorin: step 1/1. Its pathway is porphyrin-containing compound metabolism; siroheme biosynthesis; sirohydrochlorin from precorrin-2: step 1/1. In terms of biological role, multifunctional enzyme that catalyzes the SAM-dependent methylations of uroporphyrinogen III at position C-2 and C-7 to form precorrin-2 via precorrin-1. Then it catalyzes the NAD-dependent ring dehydrogenation of precorrin-2 to yield sirohydrochlorin. Finally, it catalyzes the ferrochelation of sirohydrochlorin to yield siroheme. The protein is Siroheme synthase of Xylella fastidiosa (strain 9a5c).